Reading from the N-terminus, the 313-residue chain is MSYASEVKKELTGITVHRDNAKAELMALIRMNGSIGIADHQLVLNVQTENPAIARRIYSLLKQFYGVESEIVVRRKMKLKKNNQYIVRLRYHAQHVLDDLGILQNYQIKEQVPVELLKDEWMVRSYLRGAFLAGGSVNNPETSRYHLEIYSLYEEHNEIIAQMMNKFGLNAQTTARRSGFIVYLKEAEKIANFMSLIGATNSMLQFENVRIVRDMRNSVNRLVNCENANLNKIANASTRQIENIEFIDSRVGLSSLPDKLREIAETRLAHQEVSLKELGELVPGGPISKSGVNHRLRKLNAYADELRASEVKQ.

Residues Ser-274–Ala-308 constitute a DNA-binding region (H-T-H motif).

Belongs to the WhiA family.

Involved in cell division and chromosome segregation. The polypeptide is Probable cell division protein WhiA (Limosilactobacillus reuteri subsp. reuteri (strain JCM 1112) (Lactobacillus reuteri)).